Here is a 718-residue protein sequence, read N- to C-terminus: Ophiobolin F synthase oblA (718 aa).

Residues 1 to 320 (MACKYSTLID…RYNGPTKFNE (320 aa)) form a (7Z)-ophiobola-7,19-dien-3-ol synthase region. Residues aspartate 93 and aspartate 97 each contribute to the Mg(2+) site. Position 93 (aspartate 93) interacts with substrate. The DDXXD 1 motif lies at 93–97 (DDVID). Substrate is bound by residues 180–183 (RALD), asparagine 224, 228–232 (SFEKE), and 311–312 (RY). The short motif at 224-232 (NDLFSFEKE) is the NSE/DTE element. Residues 321–718 (LQLLRSEHGL…LRVMLELLKV (398 aa)) are geranylfarnesyl diphosphate synthase. The tract at residues 346-391 (LVEGDCHESKPNELKRKRNGVSVDDEMRTNGTNGAKKPAHVSQPST) is disordered. A compositionally biased stretch (basic and acidic residues) spans 349-359 (GDCHESKPNEL). Isopentenyl diphosphate-binding residues include lysine 429, arginine 432, and histidine 461. Residues aspartate 468 and aspartate 472 each contribute to the Mg(2+) site. The DDXXD 2 motif lies at 468-472 (DDLED). Arginine 477 contributes to the dimethylallyl diphosphate binding site. Residue arginine 478 coordinates isopentenyl diphosphate. Positions 555, 556, 594, 601, 611, and 621 each coordinate dimethylallyl diphosphate.

It in the N-terminal section; belongs to the terpene synthase family. The protein in the C-terminal section; belongs to the FPP/GGPP synthase family. Mg(2+) is required as a cofactor.

It carries out the reaction isopentenyl diphosphate + (2E,6E)-farnesyl diphosphate = (2E,6E,10E)-geranylgeranyl diphosphate + diphosphate. The catalysed reaction is isopentenyl diphosphate + (2E,6E,10E)-geranylgeranyl diphosphate = (2E,6E,10E,14E)-geranylfarnesyl diphosphate + diphosphate. It catalyses the reaction (2E,6E,10E,14E)-geranylfarnesyl diphosphate + H2O = ophiobolin F + diphosphate. It functions in the pathway secondary metabolite biosynthesis; terpenoid biosynthesis. In terms of biological role, bifunctional sesterterpene synthase; part of the gene cluster that mediates the biosynthesis of the sesterterpenes ophiobolins, fungal phytotoxins with potential anti-cancer activities. The first step of the pathway is performed by the sesterterpene synthase oblA that possesses both prenyl transferase and terpene cyclase activity, converting isopentenyl diphosphate and dimethylallyl diphosphate into geranylfarnesyl diphosphate (GFPP) and further converting GFPP into ophiobolin F, respectively. Other sesterterpenoids (C(25) terpenoids) are found as minor products of oblA. It is expected that ophiobolin F is then oxidized to ophiobolin A via ophiobolin C and ophiobolin B intermediates by the combined action of the cytochrome P450 monooxygenase oblB and the FAD-dependent oxidoreductase oblC. Although oblB catalyzes multistep oxygenations at C5 and C21/C7 in a relatively efficient manner, it is unable to convert ophiobolin F to ophiobolin C and produces instead several unexpected derivatives. The polypeptide is Ophiobolin F synthase oblA (Aspergillus clavatus (strain ATCC 1007 / CBS 513.65 / DSM 816 / NCTC 3887 / NRRL 1 / QM 1276 / 107)).